Reading from the N-terminus, the 799-residue chain is Histidine biosynthesis trifunctional protein (799 aa).

The phosphoribosyl-AMP cyclohydrolase stretch occupies residues 1-229 (MVLPILPLID…FIVEQENVGF (229 aa)). Positions 230–312 (CHLETMSCFG…FYFALAKLVT (83 aa)) are phosphoribosyl-ATP pyrophosphohydrolase. The segment at 313 to 799 (NNVSLKDVEN…KLGLIPKDFQ (487 aa)) is histidinol dehydrogenase. Residues Gln618 and His621 each contribute to the Zn(2+) site. Residues Glu687 and His688 contribute to the active site. 2 residues coordinate Zn(2+): Asp721 and His780.

In the C-terminal section; belongs to the histidinol dehydrogenase family. Requires Zn(2+) as cofactor.

It catalyses the reaction 1-(5-phospho-beta-D-ribosyl)-5'-AMP + H2O = 1-(5-phospho-beta-D-ribosyl)-5-[(5-phospho-beta-D-ribosylamino)methylideneamino]imidazole-4-carboxamide. The enzyme catalyses 1-(5-phospho-beta-D-ribosyl)-ATP + H2O = 1-(5-phospho-beta-D-ribosyl)-5'-AMP + diphosphate + H(+). It carries out the reaction L-histidinol + 2 NAD(+) + H2O = L-histidine + 2 NADH + 3 H(+). It functions in the pathway amino-acid biosynthesis; L-histidine biosynthesis; L-histidine from 5-phospho-alpha-D-ribose 1-diphosphate: step 2/9. Its pathway is amino-acid biosynthesis; L-histidine biosynthesis; L-histidine from 5-phospho-alpha-D-ribose 1-diphosphate: step 3/9. The protein operates within amino-acid biosynthesis; L-histidine biosynthesis; L-histidine from 5-phospho-alpha-D-ribose 1-diphosphate: step 9/9. This Saccharomyces bayanus (Yeast) protein is Histidine biosynthesis trifunctional protein (HIS4).